The primary structure comprises 563 residues: CTP synthase (563 aa).

The amidoligase domain stretch occupies residues 1–278 (MAKATAKNSA…DLRVLEQLHL (278 aa)). Ser-24 provides a ligand contact to CTP. Residue Ser-24 participates in UTP binding. 25-30 (SLGKGI) lines the ATP pocket. L-glutamine is bound at residue Tyr-65. Asp-82 contacts ATP. Residues Asp-82 and Glu-151 each coordinate Mg(2+). Residues 158–160 (DIE), 198–203 (KTKPSQ), and Lys-234 contribute to the CTP site. UTP contacts are provided by residues 198–203 (KTKPSQ) and Lys-234. Residue 250–252 (KDV) participates in ATP binding. One can recognise a Glutamine amidotransferase type-1 domain in the interval 303 to 545 (TIALVGKYIA…VKAALEQKKA (243 aa)). Gly-363 contributes to the L-glutamine binding site. Cys-390 serves as the catalytic Nucleophile; for glutamine hydrolysis. L-glutamine is bound by residues 391–394 (LGMQ), Glu-414, and Arg-471. Active-site residues include His-518 and Glu-520. The disordered stretch occupies residues 542-563 (QKKANGKKPTAPSEKTKKTKTK).

The protein belongs to the CTP synthase family. As to quaternary structure, homotetramer.

The catalysed reaction is UTP + L-glutamine + ATP + H2O = CTP + L-glutamate + ADP + phosphate + 2 H(+). The enzyme catalyses L-glutamine + H2O = L-glutamate + NH4(+). It carries out the reaction UTP + NH4(+) + ATP = CTP + ADP + phosphate + 2 H(+). Its pathway is pyrimidine metabolism; CTP biosynthesis via de novo pathway; CTP from UDP: step 2/2. With respect to regulation, allosterically activated by GTP, when glutamine is the substrate; GTP has no effect on the reaction when ammonia is the substrate. The allosteric effector GTP functions by stabilizing the protein conformation that binds the tetrahedral intermediate(s) formed during glutamine hydrolysis. Inhibited by the product CTP, via allosteric rather than competitive inhibition. Functionally, catalyzes the ATP-dependent amination of UTP to CTP with either L-glutamine or ammonia as the source of nitrogen. Regulates intracellular CTP levels through interactions with the four ribonucleotide triphosphates. This Fibrobacter succinogenes (strain ATCC 19169 / S85) protein is CTP synthase.